Reading from the N-terminus, the 501-residue chain is Cytochrome P450 3A6 (501 aa).

Cysteine 440 is a heme binding site.

It belongs to the cytochrome P450 family. It depends on heme as a cofactor.

It is found in the endoplasmic reticulum membrane. Its subcellular location is the microsome membrane. The catalysed reaction is an organic molecule + reduced [NADPH--hemoprotein reductase] + O2 = an alcohol + oxidized [NADPH--hemoprotein reductase] + H2O + H(+). Exhibits progesterone 6 beta-hydroxylase activity. This chain is Cytochrome P450 3A6 (CYP3A6), found in Oryctolagus cuniculus (Rabbit).